Reading from the N-terminus, the 196-residue chain is Cupin-domain-containing oxidoreductase srdB (196 aa).

One can recognise a Cupin type-2 domain in the interval 92–156; that stretch reads DFAPGCKSNM…TSDEKPARML (65 aa).

This sequence belongs to the virC family.

In terms of biological role, cupin-domain-containing oxidoreductase; part of the gene cluster that mediates the biosynthesis of sordarial, a salicylic aldehyde structurally related to the phytotoxin pyriculol. The most interesting aspect of this pathway is formation of an aromatic product from the highly reducing polyketide synthase srdA. SrdA synthesizes a reduced polyketide chain from one molecule of acetyl-CoA and five molecules of malonyl-CoA. The polyketide chain is then reductively released as an aldehyde. The oxidoreductases srdC, srdD and srdE then oxidize one of the hydroxy groups to facilitate the intramolecular aldol condensation, followed by dehydration to yield a salicylic aldehyde. This aldehyde can undergo facile reduction by endogenous reductases to yield the alcohol 1-hydroxy-2-hydroxymethyl-3-pent-1,3-dienylbenzene. The flavin-dependent srdI counteract against the propensity of the aldehydes to be reduced under physiological conditions and is responsible for reoxidizing 1-hydroxy-2-hydroxymethyl-3-pent-1,3-dienylbenzene back to the salicylic aldehyde. This salicylic aldehyde is then selectively epoxidized by the cupin-domain-containing oxidoreductase srdB to yield the epoxide, which can be hydrolyzed stereoselectively by the hydrolase srdG to give the final product sordarial. The chain is Cupin-domain-containing oxidoreductase srdB from Neurospora crassa (strain ATCC 24698 / 74-OR23-1A / CBS 708.71 / DSM 1257 / FGSC 987).